The following is a 1071-amino-acid chain: ATP-dependent helicase/deoxyribonuclease subunit B (1071 aa).

The protein belongs to the helicase family. AddB/RexB type 2 subfamily. In terms of assembly, heterodimer of AddA and RexB. The cofactor is Mg(2+).

In terms of biological role, the heterodimer acts as both an ATP-dependent DNA helicase and an ATP-dependent, dual-direction single-stranded exonuclease. Recognizes the chi site generating a DNA molecule suitable for the initiation of homologous recombination. This subunit has 5' -&gt; 3' nuclease activity but not helicase activity. In Streptococcus pyogenes serotype M3 (strain ATCC BAA-595 / MGAS315), this protein is ATP-dependent helicase/deoxyribonuclease subunit B.